The following is a 92-amino-acid chain: Large ribosomal subunit protein bL27 (92 aa).

The interval Met-1–Gly-22 is disordered.

It belongs to the bacterial ribosomal protein bL27 family.

This Mycoplasmopsis agalactiae (strain NCTC 10123 / CIP 59.7 / PG2) (Mycoplasma agalactiae) protein is Large ribosomal subunit protein bL27.